Here is a 982-residue protein sequence, read N- to C-terminus: Hunchback-like protein (982 aa).

The interval 87-194 (QPGEKIHPDG…SNYQVTSEPV (108 aa)) is disordered. Over residues 101–110 (PKEDGRKSSE) the composition is skewed to basic and acidic residues. The segment covering 111-132 (HTNSYDVSASQSPSNDGAQSDS) has biased composition (polar residues). Over residues 142–152 (CMTETEMDTDE) the composition is skewed to acidic residues. The segment covering 153-175 (KDSTIKPEDQATPKLEEGSDSKP) has biased composition (basic and acidic residues). Residues 176–193 (ESTSVEGTSSNYQVTSEP) are compositionally biased toward polar residues. 7 C2H2-type zinc fingers span residues 336–358 (LVCP…MNTH), 361–384 (HQCS…RESH), 538–560 (FKCK…ARTH), 567–589 (LNCQ…YRNH), 595–617 (FQCK…MKSH), 623–647 (FRCM…KYNH), and 734–756 (LKCS…SMSH). Positions 377-415 (KKHMRESHTVEEQLRAGFESEPAKESASSPKNLSLSKDG) are disordered. The interval 811-896 (EEMDQGSDSA…PPLHSSSIVA (86 aa)) is disordered. Composition is skewed to polar residues over residues 816–831 (GSDS…QISS) and 843–862 (SLEQ…SNDS). Over residues 863–875 (AMEKDGESADDAP) the composition is skewed to basic and acidic residues. C2H2-type zinc fingers lie at residues 929–951 (FYCD…MRFH) and 957–981 (FMCS…QARH).

It belongs to the hunchback C2H2-type zinc-finger protein family. In terms of tissue distribution, expressed primarily in ectodermal cells during embryonic and larval development.

It is found in the nucleus. Required for the late stages of development. Plays a role in the developmental timing of postembryonic hypodermal seam cell fusion events and adult alae production. The sequence is that of Hunchback-like protein from Caenorhabditis elegans.